We begin with the raw amino-acid sequence, 50 residues long: Putative protein HokG (50 aa).

A helical transmembrane segment spans residues 5–25 (YALVAIIVLCCTVLGFTLMVG).

Belongs to the Hok/Gef family.

The protein localises to the cell inner membrane. In terms of biological role, toxic component of a type I toxin-antitoxin (TA) system. When overexpressed kills cells within minutes; causes collapse of the transmembrane potential and arrest of respiration. Its toxic effect is probably neutralized by an antisense antitoxin Sok RNA. This is Putative protein HokG (hokG) from Escherichia coli O157:H7.